Consider the following 800-residue polypeptide: Phenylalanine--tRNA ligase beta subunit (800 aa).

In terms of domain architecture, tRNA-binding spans 39–154; that stretch reads TKDIKNLVVG…EAQVPGTDAL (116 aa). The B5 domain maps to 408–483; the sequence is AFITPIDITA…RIYGYDDIPS (76 aa). Asp461, Asp467, Glu470, and Glu471 together coordinate Mg(2+). In terms of domain architecture, FDX-ACB spans 708–800; the sequence is PRFPGMSRDI…ALIEQGAVIR (93 aa).

The protein belongs to the phenylalanyl-tRNA synthetase beta subunit family. Type 1 subfamily. In terms of assembly, tetramer of two alpha and two beta subunits. Requires Mg(2+) as cofactor.

It localises to the cytoplasm. It carries out the reaction tRNA(Phe) + L-phenylalanine + ATP = L-phenylalanyl-tRNA(Phe) + AMP + diphosphate + H(+). This is Phenylalanine--tRNA ligase beta subunit from Staphylococcus aureus (strain COL).